The sequence spans 248 residues: 2,3-bisphosphoglycerate-dependent phosphoglycerate mutase (248 aa).

Residues R8–N15, T21–G22, R60, E87–Y90, K98, R114–R115, and G183–N184 each bind substrate. The active-site Tele-phosphohistidine intermediate is the H9. E87 functions as the Proton donor/acceptor in the catalytic mechanism.

The protein belongs to the phosphoglycerate mutase family. BPG-dependent PGAM subfamily. Homodimer.

It carries out the reaction (2R)-2-phosphoglycerate = (2R)-3-phosphoglycerate. Its pathway is carbohydrate degradation; glycolysis; pyruvate from D-glyceraldehyde 3-phosphate: step 3/5. Catalyzes the interconversion of 2-phosphoglycerate and 3-phosphoglycerate. The protein is 2,3-bisphosphoglycerate-dependent phosphoglycerate mutase of Burkholderia cenocepacia (strain ATCC BAA-245 / DSM 16553 / LMG 16656 / NCTC 13227 / J2315 / CF5610) (Burkholderia cepacia (strain J2315)).